Here is a 95-residue protein sequence, read N- to C-terminus: N(2)-fixation sustaining protein CowN (95 aa).

It belongs to the CowN family.

Is required to sustain N(2)-dependent growth in the presence of low levels of carbon monoxide (CO). Probably acts by protecting the N(2) fixation ability of the nitrogenase complex, which is inactivated in the presence of CO. The polypeptide is N(2)-fixation sustaining protein CowN (Allochromatium vinosum (strain ATCC 17899 / DSM 180 / NBRC 103801 / NCIMB 10441 / D) (Chromatium vinosum)).